A 379-amino-acid polypeptide reads, in one-letter code: MVFFTCNACGESVKKIQVEKHVSVCRNCECLSCIDCGKDFWGDDYKNHVKCISEDQKYGGKGYEGKTHKGDIKQQAWIQKISELIKRPNVSPKVRELLEQISAFDNVPRKKAKFQNWMKNSLKVHNESILDQVWNIFSEASNSEPVNKEQDQRPLHPVANPHAEISTKVPASKVKDAVEQQGEVKKNKRERKEERQKKRKREKKELKLENHQENSRNQKPKKRKKGQEADLEAGGEEVPEANGSAGKRSKKKKQRKDSASEEEARVGAGKRKRRHSEVETDSKKKKMKLPEHPEGGEPEDDEAPAKGKFNWKGTIKAILKQAPDNEITIKKLRKKVLAQYYTVTDEHHRSEEELLVIFNKKISKNPTFKLLKDKVKLVK.

C2HC LYAR-type zinc fingers lie at residues 1-26 (MVFF…SVCR) and 28-52 (CECL…VKCI). Zn(2+) contacts are provided by Cys6 and Cys9. Lys14 is covalently cross-linked (Glycyl lysine isopeptide (Lys-Gly) (interchain with G-Cter in SUMO2)). The Zn(2+) site is built by His21, Cys25, Cys33, Cys36, His48, and Cys51. A disordered region spans residues 161 to 307 (PHAEISTKVP…PEDDEAPAKG (147 aa)). Basic and acidic residues-rich tracts occupy residues 173–196 (KVKD…EERQ) and 203–216 (KKEL…ENSR). Residues 175–219 (KDAVEQQGEVKKNKRERKEERQKKRKREKKELKLENHQENSRNQK) are a coiled coil. A Glycyl lysine isopeptide (Lys-Gly) (interchain with G-Cter in SUMO2) cross-link involves residue Lys207. The residue at position 215 (Ser215) is a Phosphoserine. Residues 229-239 (ADLEAGGEEVP) are compositionally biased toward acidic residues. Ser244 carries the phosphoserine modification. Basic and acidic residues-rich tracts occupy residues 256–265 (KDSASEEEAR) and 276–295 (SEVE…HPEG).

In terms of assembly, interacts with PRMT5; this interaction is direct. Interacts with GNL2 and RPL23A. Interacts with nucleolin/NCL; this interaction is direct. Interacts with phosphorylated IRF3; this interaction impairs IRF3 DNA-binding activity. Predominantly expressed in testis.

It localises to the nucleus. The protein resides in the nucleolus. Its subcellular location is the cytoplasm. The protein localises to the cell projection. It is found in the cilium. It localises to the photoreceptor outer segment. In terms of biological role, plays a role in the maintenance of the appropriate processing of 47S/45S pre-rRNA to 32S/30S pre-rRNAs and their subsequent processing to produce 18S and 28S rRNAs. Also acts at the level of transcription regulation. Along with PRMT5, binds the gamma-globin (HBG1/HBG2) promoter and represses its expression. In neuroblastoma cells, may also repress the expression of oxidative stress genes, including CHAC1, HMOX1, SLC7A11, ULBP1 and SNORD41 that encodes a small nucleolar RNA. Preferentially binds to a DNA motif containing 5'-GGTTAT-3'. Negatively regulates the antiviral innate immune response by targeting IRF3 and impairing its DNA-binding activity. In addition, inhibits NF-kappa-B-mediated expression of pro-inflammatory cytokines. Stimulates phagocytosis of photoreceptor outer segments by retinal pigment epithelial cells. Prevents nucleolin/NCL self-cleavage, maintaining a normal steady-state level of NCL protein in undifferentiated embryonic stem cells (ESCs), which in turn is essential for ESC self-renewal. This Homo sapiens (Human) protein is Cell growth-regulating nucleolar protein (LYAR).